The chain runs to 735 residues: MEVCNCIEPQWPADELLMKYQYISDFFIAVAYFSIPLELIYFVKKSAVFPYRWVLVQFGAFIVLCGATHLINLWTFTTHSRTVALVMTTAKVLTAVVSCATALMLVHIIPDLLSVKTRELFLKNKAAELDREMGLIRTQEETGRHVRMLTHEIRSTLDRHTILKTTLVELGRTLALEECALWMPTRTGLELQLSYTLRQQHPVEYTVPIQLPVINQVFGTSRAVKISPNSPVARLRPVSGKYLLGEVVAVRVPLLHLSNFQINDWPELSTKRYALMVLMLPSDSARQWHVHELELVEVVADQVAVALSHAAILEESMRARDLLMEQNVALDIARREAETAIRARNDFLAVMNHEMRTPMHAIIALSSLLQETELTPEQRLMVETVLKSSSLLATLMNDVLDLSRLEDGSLQLELGTFNLHTLFREVLNLIKPIAVVKKLPITLNLAPDLPEFVVGDEKRLMQIILNIVGNAVKFSKQGSISVTALVTKSDNRAPPDFFVVPTGSHFYLRVKVKDLGAGINPQDIPKLFTKFAQTQSLATRSSGGSGLGLAISKRFVNLMEGNIWIESEGVGKGCTAIFDVKLAISNESKQSGIPKVPANPQHVNFAGLKVLVMDENGVSRMVTKGLLVHLGCEVTTVSSNEECLRVVSHEHRVVFMDVCTPGVENYQIALRIHEKFTKRHQRPLLVALTGNTDKSTKEKCMSFGLDGVLLKPVSLDNMRNVLSDRLEHRVLYEAM.

A run of 3 helical transmembrane segments spans residues 23–43 (ISDF…IYFV), 54–74 (VLVQ…INLW), and 92–112 (VLTA…IPDL). Residues Cys-65 and His-69 each coordinate Cu cation. Positions 158-307 (DRHTILKTTL…VVADQVAVAL (150 aa)) constitute a GAF domain. The region spanning 350–586 (VMNHEMRTPM…IFDVKLAISN (237 aa)) is the Histidine kinase domain. Phosphohistidine; by autocatalysis is present on His-353. The Response regulatory domain maps to 609 to 726 (KVLVMDENGV…NMRNVLSDRL (118 aa)). At Asp-657 the chain carries 4-aspartylphosphate. A Glycyl lysine isopeptide (Lys-Gly) (interchain with G-Cter in ubiquitin) cross-link involves residue Lys-711.

Belongs to the ethylene receptor family. In terms of assembly, homodimer; disulfide-linked. The cofactor is Cu cation. Activation probably requires a transfer of a phosphate group between a His in the transmitter domain and an Asp of the receiver domain.

The protein resides in the endoplasmic reticulum membrane. The enzyme catalyses ATP + protein L-histidine = ADP + protein N-phospho-L-histidine.. Its function is as follows. May act early in the ethylene signal transduction pathway, possibly as an ethylene receptor, or as a regulator of the pathway. This is Ethylene receptor 1 (ETR1) from Brassica oleracea (Wild cabbage).